A 335-amino-acid polypeptide reads, in one-letter code: Biotin synthase (335 aa).

Residues 53-276 (VEIEGIVSVK…RTILRFAGGR (224 aa)) enclose the Radical SAM core domain. [4Fe-4S] cluster-binding residues include Cys66, Cys70, and Cys73. [2Fe-2S] cluster-binding residues include Cys109, Cys142, Cys201, and Arg271.

It belongs to the radical SAM superfamily. Biotin synthase family. Homodimer. The cofactor is [4Fe-4S] cluster. [2Fe-2S] cluster serves as cofactor.

It catalyses the reaction (4R,5S)-dethiobiotin + (sulfur carrier)-SH + 2 reduced [2Fe-2S]-[ferredoxin] + 2 S-adenosyl-L-methionine = (sulfur carrier)-H + biotin + 2 5'-deoxyadenosine + 2 L-methionine + 2 oxidized [2Fe-2S]-[ferredoxin]. It participates in cofactor biosynthesis; biotin biosynthesis; biotin from 7,8-diaminononanoate: step 2/2. In terms of biological role, catalyzes the conversion of dethiobiotin (DTB) to biotin by the insertion of a sulfur atom into dethiobiotin via a radical-based mechanism. The protein is Biotin synthase of Acidothermus cellulolyticus (strain ATCC 43068 / DSM 8971 / 11B).